The chain runs to 98 residues: METTKYEITYIIRPDLDDAAKTALVERFDKILTDNGAELINSKDWSKRRFAYEIGGFNEGIYHVITLNATDDKGLNEFDRLAKINDSILRHMIVKRED.

The protein belongs to the bacterial ribosomal protein bS6 family.

Functionally, binds together with bS18 to 16S ribosomal RNA. The sequence is that of Small ribosomal subunit protein bS6 from Levilactobacillus brevis (strain ATCC 367 / BCRC 12310 / CIP 105137 / JCM 1170 / LMG 11437 / NCIMB 947 / NCTC 947) (Lactobacillus brevis).